The sequence spans 694 residues: Elongation factor G (694 aa).

Residues 8-287 (EDYRNFGIMA…AVVEFLPAPT (280 aa)) form the tr-type G domain. GTP-binding positions include 17–24 (AHIDAGKT), 86–90 (DTPGH), and 140–143 (NKMD).

The protein belongs to the TRAFAC class translation factor GTPase superfamily. Classic translation factor GTPase family. EF-G/EF-2 subfamily.

The protein localises to the cytoplasm. Functionally, catalyzes the GTP-dependent ribosomal translocation step during translation elongation. During this step, the ribosome changes from the pre-translocational (PRE) to the post-translocational (POST) state as the newly formed A-site-bound peptidyl-tRNA and P-site-bound deacylated tRNA move to the P and E sites, respectively. Catalyzes the coordinated movement of the two tRNA molecules, the mRNA and conformational changes in the ribosome. The chain is Elongation factor G from Brucella suis (strain ATCC 23445 / NCTC 10510).